The following is a 35-amino-acid chain: Basic endochitinase CH1 (35 aa).

Belongs to the glycosyl hydrolase 19 family. Chitinase class I subfamily.

It catalyses the reaction Random endo-hydrolysis of N-acetyl-beta-D-glucosaminide (1-&gt;4)-beta-linkages in chitin and chitodextrins.. Functionally, defense against chitin-containing fungal pathogens. The protein is Basic endochitinase CH1 of Castanea sativa (Sweet chestnut).